A 258-amino-acid polypeptide reads, in one-letter code: Deoxyribose-phosphate aldolase (258 aa).

Catalysis depends on aspartate 102, which acts as the Proton donor/acceptor. Residue lysine 165 is the Schiff-base intermediate with acetaldehyde of the active site. The active-site Proton donor/acceptor is the lysine 199.

The protein belongs to the DeoC/FbaB aldolase family. DeoC type 2 subfamily.

It is found in the cytoplasm. It carries out the reaction 2-deoxy-D-ribose 5-phosphate = D-glyceraldehyde 3-phosphate + acetaldehyde. Its pathway is carbohydrate degradation; 2-deoxy-D-ribose 1-phosphate degradation; D-glyceraldehyde 3-phosphate and acetaldehyde from 2-deoxy-alpha-D-ribose 1-phosphate: step 2/2. In terms of biological role, catalyzes a reversible aldol reaction between acetaldehyde and D-glyceraldehyde 3-phosphate to generate 2-deoxy-D-ribose 5-phosphate. This is Deoxyribose-phosphate aldolase from Aliivibrio fischeri (strain ATCC 700601 / ES114) (Vibrio fischeri).